Reading from the N-terminus, the 430-residue chain is Maintenance of mitochondrial morphology protein 1 (430 aa).

The Lumenal portion of the chain corresponds to 1 to 70; it reads MSQGLIETTT…NGNTWSFTQG (70 aa). The helical transmembrane segment at 71 to 91 threads the bilayer; that stretch reads LVIGQISVIFIIIVFVKFFVF. The Cytoplasmic segment spans residues 92–430; the sequence is ADSSSHIPTK…TPGEFVNSNI (339 aa). The SMP-LTD domain occupies 159–387; sequence ASESLDWFNV…EPRFQVVRLP (229 aa). The disordered stretch occupies residues 305 to 326; sequence GYSKENGSADSASDNDEDEDDG. A compositionally biased stretch (acidic residues) spans 317–326; the sequence is SDNDEDEDDG.

This sequence belongs to the MMM1 family. In terms of assembly, homodimer. Component of the ER-mitochondria encounter structure (ERMES) or MDM complex, composed of MMM1, MDM10, MDM12 and MDM34. An MMM1 homodimer associates with one molecule of MDM12 on each side in a pairwise head-to-tail manner, and the SMP-LTD domains of MMM1 and MDM12 generate a continuous hydrophobic tunnel for phospholipid trafficking.

It is found in the endoplasmic reticulum membrane. Its function is as follows. Component of the ERMES/MDM complex, which serves as a molecular tether to connect the endoplasmic reticulum (ER) and mitochondria. Components of this complex are involved in the control of mitochondrial shape and protein biogenesis, and function in nonvesicular lipid trafficking between the ER and mitochondria. The MDM12-MMM1 subcomplex functions in the major beta-barrel assembly pathway that is responsible for biogenesis of all outer membrane beta-barrel proteins, and acts in a late step after the SAM complex. The MDM10-MDM12-MMM1 subcomplex further acts in the TOM40-specific pathway after the action of the MDM12-MMM1 complex. Essential for establishing and maintaining the structure of mitochondria and maintenance of mtDNA nucleoids. This is Maintenance of mitochondrial morphology protein 1 from Candida dubliniensis (strain CD36 / ATCC MYA-646 / CBS 7987 / NCPF 3949 / NRRL Y-17841) (Yeast).